The following is a 208-amino-acid chain: Probable GTP-binding protein EngB (208 aa).

The EngB-type G domain maps to 18–187 (KQFEICVIGR…FALMKKVVIE (170 aa)). GTP contacts are provided by residues 26-33 (GRSNVGKS), 52-56 (GRTQL), 69-72 (DLPG), 135-138 (NKVD), and 166-168 (VSA). Positions 33 and 54 each coordinate Mg(2+).

This sequence belongs to the TRAFAC class TrmE-Era-EngA-EngB-Septin-like GTPase superfamily. EngB GTPase family. The cofactor is Mg(2+).

Its function is as follows. Necessary for normal cell division and for the maintenance of normal septation. The protein is Probable GTP-binding protein EngB of Ureaplasma urealyticum serovar 10 (strain ATCC 33699 / Western).